The sequence spans 214 residues: ATP-dependent Clp protease proteolytic subunit (214 aa).

Serine 113 acts as the Nucleophile in catalysis. The active site involves histidine 138.

The protein belongs to the peptidase S14 family. As to quaternary structure, fourteen ClpP subunits assemble into 2 heptameric rings which stack back to back to give a disk-like structure with a central cavity, resembling the structure of eukaryotic proteasomes.

It localises to the cytoplasm. The enzyme catalyses Hydrolysis of proteins to small peptides in the presence of ATP and magnesium. alpha-casein is the usual test substrate. In the absence of ATP, only oligopeptides shorter than five residues are hydrolyzed (such as succinyl-Leu-Tyr-|-NHMec, and Leu-Tyr-Leu-|-Tyr-Trp, in which cleavage of the -Tyr-|-Leu- and -Tyr-|-Trp bonds also occurs).. Cleaves peptides in various proteins in a process that requires ATP hydrolysis. Has a chymotrypsin-like activity. Plays a major role in the degradation of misfolded proteins. The chain is ATP-dependent Clp protease proteolytic subunit from Teredinibacter turnerae (strain ATCC 39867 / T7901).